Here is a 364-residue protein sequence, read N- to C-terminus: Lipoyl synthase, mitochondrial (364 aa).

A disordered region spans residues 34–53; it reads PNFQDFIQNSDNSKDDFENY. 7 residues coordinate [4Fe-4S] cluster: Cys-99, Cys-104, Cys-110, Cys-130, Cys-134, Cys-137, and Ser-345. Positions 115 to 334 constitute a Radical SAM core domain; sequence EHGTQTATIM…EQRGNELGFL (220 aa).

The protein belongs to the radical SAM superfamily. Lipoyl synthase family. Requires [4Fe-4S] cluster as cofactor.

The protein resides in the mitochondrion. It catalyses the reaction [[Fe-S] cluster scaffold protein carrying a second [4Fe-4S](2+) cluster] + N(6)-octanoyl-L-lysyl-[protein] + 2 oxidized [2Fe-2S]-[ferredoxin] + 2 S-adenosyl-L-methionine + 4 H(+) = [[Fe-S] cluster scaffold protein] + N(6)-[(R)-dihydrolipoyl]-L-lysyl-[protein] + 4 Fe(3+) + 2 hydrogen sulfide + 2 5'-deoxyadenosine + 2 L-methionine + 2 reduced [2Fe-2S]-[ferredoxin]. It functions in the pathway protein modification; protein lipoylation via endogenous pathway; protein N(6)-(lipoyl)lysine from octanoyl-[acyl-carrier-protein]: step 2/2. Catalyzes the radical-mediated insertion of two sulfur atoms into the C-6 and C-8 positions of the octanoyl moiety bound to the lipoyl domains of lipoate-dependent enzymes, thereby converting the octanoylated domains into lipoylated derivatives. In Drosophila grimshawi (Hawaiian fruit fly), this protein is Lipoyl synthase, mitochondrial.